A 306-amino-acid chain; its full sequence is MTMSHLLTMSELSEVEISEILKDAEDFANGKESKTTEQTFVANLFFENSTRTRFSFEVAEKRLGLDVLNFSADASSVQKGETLYDTIRTLESIGTKAVVIRHEQDRYFDELKDQVNIPILNAGDGCGNHPTQCLLDLLTIKQEFGRFEGLQIAIVGDVRHSRVARSNAEALTKLGATIYFASPEEWKDEDNTFGTYKPLDELVPEVDVMMLLRVQHERHDHYETDIMKEYHEKHGLTVEREKRMKEGSIIMHPAPVNRDVEIASELVECERSRIFKQMENGVYVRMAVLKRALPNVLGGMKHELLV.

Carbamoyl phosphate is bound by residues Arg51 and Thr52. Lys79 lines the L-aspartate pocket. Positions 101, 129, and 132 each coordinate carbamoyl phosphate. L-aspartate is bound by residues Arg162 and Arg213. Carbamoyl phosphate contacts are provided by Ala254 and Pro255.

Belongs to the aspartate/ornithine carbamoyltransferase superfamily. ATCase family. Heterododecamer (2C3:3R2) of six catalytic PyrB chains organized as two trimers (C3), and six regulatory PyrI chains organized as three dimers (R2).

It catalyses the reaction carbamoyl phosphate + L-aspartate = N-carbamoyl-L-aspartate + phosphate + H(+). It functions in the pathway pyrimidine metabolism; UMP biosynthesis via de novo pathway; (S)-dihydroorotate from bicarbonate: step 2/3. Its function is as follows. Catalyzes the condensation of carbamoyl phosphate and aspartate to form carbamoyl aspartate and inorganic phosphate, the committed step in the de novo pyrimidine nucleotide biosynthesis pathway. The polypeptide is Aspartate carbamoyltransferase catalytic subunit (Bacillus thuringiensis (strain Al Hakam)).